Here is a 273-residue protein sequence, read N- to C-terminus: Dermonecrotic toxin (273 aa).

Mg(2+)-binding residues include E20 and D22. H35 functions as the Nucleophile in the catalytic mechanism. An intrachain disulfide couples C39 to C45. D79 is a Mg(2+) binding site.

The protein belongs to the arthropod phospholipase D family. Class I subfamily. Mg(2+) serves as cofactor. In terms of tissue distribution, expressed by the venom gland.

It localises to the secreted. It catalyses the reaction an N-(acyl)-sphingosylphosphocholine = an N-(acyl)-sphingosyl-1,3-cyclic phosphate + choline. The catalysed reaction is an N-(acyl)-sphingosylphosphoethanolamine = an N-(acyl)-sphingosyl-1,3-cyclic phosphate + ethanolamine. It carries out the reaction a 1-acyl-sn-glycero-3-phosphocholine = a 1-acyl-sn-glycero-2,3-cyclic phosphate + choline. The enzyme catalyses a 1-acyl-sn-glycero-3-phosphoethanolamine = a 1-acyl-sn-glycero-2,3-cyclic phosphate + ethanolamine. Functionally, dermonecrotic toxins cleave the phosphodiester linkage between the phosphate and headgroup of certain phospholipids (sphingolipid and lysolipid substrates), forming an alcohol (often choline) and a cyclic phosphate. This toxin acts on sphingomyelin (SM). It may also act on ceramide phosphoethanolamine (CPE), lysophosphatidylcholine (LPC) and lysophosphatidylethanolamine (LPE), but not on lysophosphatidylserine (LPS), and lysophosphatidylglycerol (LPG). It acts by transphosphatidylation, releasing exclusively cyclic phosphate products as second products. Induces dermonecrosis, hemolysis, increased vascular permeability, edema, inflammatory response, and platelet aggregation. The protein is Dermonecrotic toxin of Loxosceles laeta (South American recluse spider).